The chain runs to 853 residues: DNA mismatch repair protein MutS (853 aa).

Residue 613–620 (GPNMGGKS) participates in ATP binding.

It belongs to the DNA mismatch repair MutS family.

This protein is involved in the repair of mismatches in DNA. It is possible that it carries out the mismatch recognition step. This protein has a weak ATPase activity. This is DNA mismatch repair protein MutS from Vibrio parahaemolyticus serotype O3:K6 (strain RIMD 2210633).